A 171-amino-acid chain; its full sequence is AN1-type zinc finger protein 2A (171 aa).

2 AN1-type zinc fingers span residues 4–52 (PDLG…KKDV) and 94–142 (KVFT…SSAS). Cysteine 10, cysteine 15, cysteine 25, cysteine 28, cysteine 33, histidine 36, histidine 42, cysteine 44, cysteine 100, cysteine 105, cysteine 115, cysteine 118, cysteine 123, histidine 126, histidine 132, and cysteine 134 together coordinate Zn(2+). Positions 134–171 (CQAGSSSASRGRTSTSRAAEQKPSGVSWLAQRLRRTVK) are disordered. Positions 136–151 (AGSSSASRGRTSTSRA) are enriched in low complexity.

It localises to the cytoplasm. The protein localises to the nucleus. The sequence is that of AN1-type zinc finger protein 2A (Zfand2a) from Mus musculus (Mouse).